The chain runs to 374 residues: Diels-Alderase fsa2 (374 aa).

Positions 1 to 216 (MSNVTVSAFT…MDRVWSPLSW (216 aa)) are beta-sandwich motif. The beta-barrel motif stretch occupies residues 216–374 (WPQVMTESYY…VGTGGQCELS (159 aa)).

This sequence belongs to the Diels-Alderase family.

The catalysed reaction is (5S)-3-[(2E,6R,8E,10E,12E)-2,6-dimethyltetradeca-2,8,10,12-tetraenoyl]-5-(hydroxymethyl)pyrrolidine-2,4-dione = trichosetin. The protein operates within mycotoxin biosynthesis. Diels-Alderase; part of the gene cluster that mediates the biosynthesis of the HIV-1 integrase inhibitor equisetin and of fusarisetin A, both trans-fused decalin-containing tetramic acids showing also antimicrobial activity. The PKS module of fsa1 together with the enoylreductase fsa3 catalyze the formation of the polyketide unit which is then conjugated to L-serine by the condensation domain of the fsa1 NRPS module. Activity of the Dieckmann cyclase domain (RED) results in release of the Dieckmann product intermediate. Diels-Alderase fsa2 is involved in endo-selective Diels-Alder cycloaddition to form the decalin ring, leading to the production of N-desmethylequisetin also called trichosetin. Subsequent N-methylation is carried out by fsa4 to give equisetin. The enzymatic gene responsible for the conversion of equisetin to fusarisetin A has not been identified yet and is probably located outside of the fsa cluster. This Fusarium sp. (strain FN080326) protein is Diels-Alderase fsa2.